Consider the following 468-residue polypeptide: Charged multivesicular body protein 7 (468 aa).

2 coiled-coil regions span residues 233–303 and 353–379; these read EKLL…AETD and VSDA…MIVD. The disordered stretch occupies residues 428 to 468; sequence DVPSGPVVISPQRPTEWKTDQASRSPADGSFSRSVPEPVLQ.

Belongs to the SNF7 family.

Its subcellular location is the cytoplasm. The protein resides in the nucleus envelope. Its function is as follows. ESCRT-III-like protein required to recruit the ESCRT-III complex to the nuclear envelope during late anaphase. Together with SPAST, the ESCRT-III complex promotes nuclear envelope sealing and mitotic spindle disassembly during late anaphase. Plays a role in the endosomal sorting pathway. In Xenopus tropicalis (Western clawed frog), this protein is Charged multivesicular body protein 7 (chmp7).